The primary structure comprises 330 residues: Aspartate--ammonia ligase (330 aa).

The protein belongs to the class-II aminoacyl-tRNA synthetase family. AsnA subfamily.

The protein localises to the cytoplasm. It carries out the reaction L-aspartate + NH4(+) + ATP = L-asparagine + AMP + diphosphate + H(+). The protein operates within amino-acid biosynthesis; L-asparagine biosynthesis; L-asparagine from L-aspartate (ammonia route): step 1/1. The protein is Aspartate--ammonia ligase of Streptococcus agalactiae serotype Ia (strain ATCC 27591 / A909 / CDC SS700).